Consider the following 52-residue polypeptide: UPF0391 membrane protein XOO4217 (52 aa).

Transmembrane regions (helical) follow at residues 5–25 and 27–47; these read AMIFFVIAIIAAVLGFSGIAG and ATNIAWILFVVFLILAVISMF.

The protein belongs to the UPF0391 family.

The protein localises to the cell membrane. The protein is UPF0391 membrane protein XOO4217 of Xanthomonas oryzae pv. oryzae (strain KACC10331 / KXO85).